The chain runs to 276 residues: Putative serine/threonine-protein kinase R436 (276 aa).

Residues 6–266 (YSLDKLIQNR…IKQKLNHFKT (261 aa)) form the Protein kinase domain. Residues 12–20 (IQNRKSKRI) and K35 contribute to the ATP site. The active-site Proton acceptor is D132.

Belongs to the protein kinase superfamily. Ser/Thr protein kinase family.

The enzyme catalyses L-seryl-[protein] + ATP = O-phospho-L-seryl-[protein] + ADP + H(+). It carries out the reaction L-threonyl-[protein] + ATP = O-phospho-L-threonyl-[protein] + ADP + H(+). This Acanthamoeba polyphaga (Amoeba) protein is Putative serine/threonine-protein kinase R436.